Here is a 587-residue protein sequence, read N- to C-terminus: Arginine--tRNA ligase (587 aa).

The 'HIGH' region motif lies at 127-137; it reads ANPTGPLHVGH.

This sequence belongs to the class-I aminoacyl-tRNA synthetase family. Monomer.

The protein localises to the cytoplasm. The catalysed reaction is tRNA(Arg) + L-arginine + ATP = L-arginyl-tRNA(Arg) + AMP + diphosphate. This Dechloromonas aromatica (strain RCB) protein is Arginine--tRNA ligase.